Here is a 388-residue protein sequence, read N- to C-terminus: 5-hydroxytryptamine receptor 4 (388 aa).

Residues 1-19 (MDKLDANVSSEEGFGSVEK) are Extracellular-facing. N-linked (GlcNAc...) asparagine glycosylation occurs at Asn-7. The chain crosses the membrane as a helical span at residues 20-44 (VVLLTFLSTVILMAILGNLLVMVAV). Topologically, residues 45 to 54 (CWDRQLRKIK) are cytoplasmic. The chain crosses the membrane as a helical span at residues 55–78 (TNYFIVSLAFADLLVSVLVMPFGA). Residues 79–92 (IELVQDIWIYGEVF) are Extracellular-facing. Residues 93–117 (CLVRTSLDVLLTTASIFHLCCISLD) form a helical membrane-spanning segment. Residues Cys-93 and Cys-184 are joined by a disulfide bond. Asp-100 is a binding site for serotonin. Residues 118–133 (RYYAICCQPLVYRNKM) are Cytoplasmic-facing. A helical membrane pass occupies residues 134–157 (TPLRIALMLGGCWVIPTFISFLPI). Residues 158-188 (MQGWNNIGIIDLIEKRKFNQNSNSTYCVFMV) are Extracellular-facing. A helical membrane pass occupies residues 189–212 (NKPYAITCSVVAFYIPFLLMVLAY). Over 213 to 257 (YRIYVTAKEHAHQIQMLQRAGASSESRPQSADQHSTHRMRTETKA) the chain is Cytoplasmic. A helical membrane pass occupies residues 258–283 (AKTLCIIMGCFCLCWAPFFVTNIVDP). Asn-279 contacts serotonin. At 284-290 (FIDYTVP) the chain is on the extracellular side. Residues 291 to 314 (GQVWTAFLWLGYINSGLNPFLYAF) traverse the membrane as a helical segment. The Cytoplasmic segment spans residues 315-388 (LNKSFRRAFL…PLVAAQPSDT (74 aa)).

This sequence belongs to the G-protein coupled receptor 1 family. As to quaternary structure, interacts (via C-terminus 330-346 AA) with GRK5; this interaction is promoted by 5-HT (serotonin). In terms of assembly, interacts with MAGI2, MPP3, NHERF1 and SNX27 isoforms 1 and 2. Forms a complex including NHERF1 and EZR. Interacts with PATJ, NOS1 and SEC23A. In terms of tissue distribution, expressed in ileum, brain, and atrium, but not in the ventricle. As to expression, mainly expressed in atria and cardiac ventricle. Expressed in all cardiovascular tissues analyzed.

The protein localises to the cell membrane. It is found in the endosome membrane. In terms of biological role, G-protein coupled receptor for 5-hydroxytryptamine (serotonin), a biogenic hormone that functions as a neurotransmitter, a hormone and a mitogen. Ligand binding causes a conformation change that triggers signaling via guanine nucleotide-binding proteins (G proteins) and modulates the activity of downstream effectors. HTR4 is coupled to G(s) G alpha proteins and mediates activation of adenylate cyclase activity. The polypeptide is 5-hydroxytryptamine receptor 4 (Homo sapiens (Human)).